The primary structure comprises 231 residues: 5'-methylthioadenosine/S-adenosylhomocysteine nucleosidase (231 aa).

Glutamate 13 (proton acceptor) is an active-site residue. Substrate-binding positions include glycine 79, methionine 153, and 174 to 175 (ME). Residue aspartate 198 is the Proton donor of the active site.

This sequence belongs to the PNP/UDP phosphorylase family. MtnN subfamily.

It catalyses the reaction S-adenosyl-L-homocysteine + H2O = S-(5-deoxy-D-ribos-5-yl)-L-homocysteine + adenine. The catalysed reaction is S-methyl-5'-thioadenosine + H2O = 5-(methylsulfanyl)-D-ribose + adenine. It carries out the reaction 5'-deoxyadenosine + H2O = 5-deoxy-D-ribose + adenine. It functions in the pathway amino-acid biosynthesis; L-methionine biosynthesis via salvage pathway; S-methyl-5-thio-alpha-D-ribose 1-phosphate from S-methyl-5'-thioadenosine (hydrolase route): step 1/2. In terms of biological role, catalyzes the irreversible cleavage of the glycosidic bond in both 5'-methylthioadenosine (MTA) and S-adenosylhomocysteine (SAH/AdoHcy) to adenine and the corresponding thioribose, 5'-methylthioribose and S-ribosylhomocysteine, respectively. Also cleaves 5'-deoxyadenosine, a toxic by-product of radical S-adenosylmethionine (SAM) enzymes, into 5-deoxyribose and adenine. The chain is 5'-methylthioadenosine/S-adenosylhomocysteine nucleosidase from Halalkalibacterium halodurans (strain ATCC BAA-125 / DSM 18197 / FERM 7344 / JCM 9153 / C-125) (Bacillus halodurans).